The primary structure comprises 349 residues: Thylakoid lumenal 29 kDa protein, chloroplastic (349 aa).

At serine 155 the chain carries Phosphoserine.

The protein belongs to the peroxidase family.

Its subcellular location is the plastid. The protein resides in the chloroplast thylakoid lumen. The chain is Thylakoid lumenal 29 kDa protein, chloroplastic (TL29) from Arabidopsis thaliana (Mouse-ear cress).